We begin with the raw amino-acid sequence, 103 residues long: Large ribosomal subunit protein bL21 (103 aa).

It belongs to the bacterial ribosomal protein bL21 family. In terms of assembly, part of the 50S ribosomal subunit. Contacts protein L20.

In terms of biological role, this protein binds to 23S rRNA in the presence of protein L20. This Albidiferax ferrireducens (strain ATCC BAA-621 / DSM 15236 / T118) (Rhodoferax ferrireducens) protein is Large ribosomal subunit protein bL21.